The primary structure comprises 299 residues: Protein sprouty homolog 4 (299 aa).

Residue methionine 1 is modified to N-acetylmethionine. Disordered regions lie at residues asparagine 50–alanine 79 and phenylalanine 92–arginine 127. Low complexity predominate over residues phenylalanine 92–serine 107. Serine 125 is subject to Phosphoserine. The region spanning lysine 166–cysteine 273 is the SPR domain.

Belongs to the sprouty family. In terms of assembly, interacts (via C-terminus) with TESK1 (via both C- and N-termini); the interaction inhibits TESK1 kinase activity. Interacts with RAF1. Interacts with CAV1 (via C-terminus).

It is found in the cytoplasm. It localises to the cell projection. The protein localises to the ruffle membrane. In terms of biological role, suppresses the insulin receptor and EGFR-transduced MAPK signaling pathway, but does not inhibit MAPK activation by a constitutively active mutant Ras. Probably impairs the formation of GTP-Ras. Inhibits Ras-independent, but not Ras-dependent, activation of RAF1. Represses integrin-mediated cell spreading via inhibition of TESK1-mediated phosphorylation of cofilin. This Bos taurus (Bovine) protein is Protein sprouty homolog 4 (SPRY4).